Here is a 569-residue protein sequence, read N- to C-terminus: Pyruvate decarboxylase (569 aa).

Pyruvate contacts are provided by aspartate 38 and histidine 124. Residues threonine 398 and 421–423 (GSI) each bind thiamine diphosphate. Residue aspartate 451 coordinates Mg(2+). Thiamine diphosphate is bound by residues 452–453 (GS) and 478–483 (NEGYTI). Mg(2+) contacts are provided by asparagine 478 and glycine 480. Glutamate 484 lines the pyruvate pocket.

The protein belongs to the TPP enzyme family. Homotetramer. It depends on Mg(2+) as a cofactor. Requires thiamine diphosphate as cofactor.

The catalysed reaction is a 2-oxocarboxylate + H(+) = an aldehyde + CO2. It carries out the reaction pyruvate + H(+) = acetaldehyde + CO2. The protein is Pyruvate decarboxylase (pdcA) of Aspergillus fumigatus (strain ATCC MYA-4609 / CBS 101355 / FGSC A1100 / Af293) (Neosartorya fumigata).